The chain runs to 311 residues: p-hydroxybenzoic acid efflux pump subunit AaeA (311 aa).

A helical membrane pass occupies residues Val11–Phe31.

This sequence belongs to the membrane fusion protein (MFP) (TC 8.A.1) family.

Its subcellular location is the cell inner membrane. Forms an efflux pump with AaeB. The polypeptide is p-hydroxybenzoic acid efflux pump subunit AaeA (Yersinia pseudotuberculosis serotype O:3 (strain YPIII)).